Here is a 203-residue protein sequence, read N- to C-terminus: Dephospho-CoA kinase (203 aa).

A DPCK domain is found at 6-203; it reads KVAITGGLSC…ELYQELKIYI (198 aa). Residue 14–19 coordinates ATP; it reads SCGKSS.

Belongs to the CoaE family.

The protein localises to the cytoplasm. The catalysed reaction is 3'-dephospho-CoA + ATP = ADP + CoA + H(+). The protein operates within cofactor biosynthesis; coenzyme A biosynthesis; CoA from (R)-pantothenate: step 5/5. Catalyzes the phosphorylation of the 3'-hydroxyl group of dephosphocoenzyme A to form coenzyme A. The polypeptide is Dephospho-CoA kinase (Protochlamydia amoebophila (strain UWE25)).